A 588-amino-acid chain; its full sequence is Proline--tRNA ligase (588 aa).

The protein belongs to the class-II aminoacyl-tRNA synthetase family. ProS type 1 subfamily. Homodimer.

Its subcellular location is the cytoplasm. The catalysed reaction is tRNA(Pro) + L-proline + ATP = L-prolyl-tRNA(Pro) + AMP + diphosphate. Its function is as follows. Catalyzes the attachment of proline to tRNA(Pro) in a two-step reaction: proline is first activated by ATP to form Pro-AMP and then transferred to the acceptor end of tRNA(Pro). As ProRS can inadvertently accommodate and process non-cognate amino acids such as alanine and cysteine, to avoid such errors it has two additional distinct editing activities against alanine. One activity is designated as 'pretransfer' editing and involves the tRNA(Pro)-independent hydrolysis of activated Ala-AMP. The other activity is designated 'posttransfer' editing and involves deacylation of mischarged Ala-tRNA(Pro). The misacylated Cys-tRNA(Pro) is not edited by ProRS. The protein is Proline--tRNA ligase of Corynebacterium efficiens (strain DSM 44549 / YS-314 / AJ 12310 / JCM 11189 / NBRC 100395).